A 543-amino-acid chain; its full sequence is Hydroxylamine reductase (543 aa).

The [4Fe-4S] cluster site is built by C3, C6, C15, and C21. Residues H239, E263, C307, C398, C426, C451, E486, and K488 each coordinate hybrid [4Fe-2O-2S] cluster. Residue C398 is modified to Cysteine persulfide.

The protein belongs to the HCP family. It depends on [4Fe-4S] cluster as a cofactor. The cofactor is hybrid [4Fe-2O-2S] cluster.

It localises to the cytoplasm. It catalyses the reaction A + NH4(+) + H2O = hydroxylamine + AH2 + H(+). In terms of biological role, catalyzes the reduction of hydroxylamine to form NH(3) and H(2)O. The chain is Hydroxylamine reductase from Methanococcus vannielii (strain ATCC 35089 / DSM 1224 / JCM 13029 / OCM 148 / SB).